The following is a 288-amino-acid chain: Eukaryotic translation initiation factor 3 subunit F-2 (288 aa).

Residues Val12 to Gly149 enclose the MPN domain.

Belongs to the eIF-3 subunit F family. Component of the eukaryotic translation initiation factor 3 (eIF-3) complex. The eIF-3 complex interacts with pix.

The protein resides in the cytoplasm. Component of the eukaryotic translation initiation factor 3 (eIF-3) complex, which is involved in protein synthesis of a specialized repertoire of mRNAs and, together with other initiation factors, stimulates binding of mRNA and methionyl-tRNAi to the 40S ribosome. The eIF-3 complex specifically targets and initiates translation of a subset of mRNAs involved in cell proliferation. The protein is Eukaryotic translation initiation factor 3 subunit F-2 of Drosophila pseudoobscura pseudoobscura (Fruit fly).